A 100-amino-acid polypeptide reads, in one-letter code: NAD(P)H-quinone oxidoreductase subunit 4L, chloroplastic (100 aa).

Transmembrane regions (helical) follow at residues 2–22 (ILQH…FGLI), 28–48 (VKIL…LVIF), and 61–81 (LFGL…LAIL).

Belongs to the complex I subunit 4L family. NDH is composed of at least 16 different subunits, 5 of which are encoded in the nucleus.

Its subcellular location is the plastid. It localises to the chloroplast thylakoid membrane. It catalyses the reaction a plastoquinone + NADH + (n+1) H(+)(in) = a plastoquinol + NAD(+) + n H(+)(out). It carries out the reaction a plastoquinone + NADPH + (n+1) H(+)(in) = a plastoquinol + NADP(+) + n H(+)(out). NDH shuttles electrons from NAD(P)H:plastoquinone, via FMN and iron-sulfur (Fe-S) centers, to quinones in the photosynthetic chain and possibly in a chloroplast respiratory chain. The immediate electron acceptor for the enzyme in this species is believed to be plastoquinone. Couples the redox reaction to proton translocation, and thus conserves the redox energy in a proton gradient. The sequence is that of NAD(P)H-quinone oxidoreductase subunit 4L, chloroplastic from Chara vulgaris (Common stonewort).